The following is a 524-amino-acid chain: Gamma-taxilin (524 aa).

Residues 1 to 10 (MATRLEEVTR) are compositionally biased toward basic and acidic residues. 2 disordered regions span residues 1-37 (MATRLEEVTRGRGGGTEEASEGGRGGRRRSPPQKFEI) and 64-86 (LQHQDPSCGGTTKKHSLEGDEGS). R12 and R24 each carry omega-N-methylarginine. S79, S86, and S97 each carry phosphoserine. Residues 106–115 (REEIPGREAR) show a composition bias toward basic and acidic residues. A disordered region spans residues 106–130 (REEIPGREARTGPPDGQQDSECSRN). A coiled-coil region spans residues 153 to 465 (EEKLAALCKK…KEQVSIKAAD (313 aa)). Position 283 is a phosphotyrosine (Y283). The segment at 501–524 (VCEKSAAQKPSSSGSPAQGIESVD) is disordered. S512 is subject to Phosphoserine.

It belongs to the taxilin family. As to quaternary structure, binds to the C-terminal coiled coil region of syntaxin family members STX1A, STX3A and STX4A. Forms a heterodimer with ATF4 in osteoblasts.

It localises to the nucleus membrane. It is found in the cytoplasm. The protein localises to the cytosol. May be involved in intracellular vesicle traffic. Inhibits ATF4-mediated transcription, possibly by dimerizing with ATF4 to form inactive dimers that cannot bind DNA. May be involved in regulating bone mass density through an ATF4-dependent pathway. May be involved in cell cycle progression. The chain is Gamma-taxilin (Txlng) from Mus musculus (Mouse).